We begin with the raw amino-acid sequence, 692 residues long: Elongation factor G (692 aa).

The tr-type G domain occupies 8–282; sequence KDTRNIGIMA…AVLDYLPSPL (275 aa). Residues 17-24, 81-85, and 135-138 each bind GTP; these read AHIDAGKT, DTPGH, and NKMD.

The protein belongs to the TRAFAC class translation factor GTPase superfamily. Classic translation factor GTPase family. EF-G/EF-2 subfamily.

It is found in the cytoplasm. Functionally, catalyzes the GTP-dependent ribosomal translocation step during translation elongation. During this step, the ribosome changes from the pre-translocational (PRE) to the post-translocational (POST) state as the newly formed A-site-bound peptidyl-tRNA and P-site-bound deacylated tRNA move to the P and E sites, respectively. Catalyzes the coordinated movement of the two tRNA molecules, the mRNA and conformational changes in the ribosome. This Shouchella clausii (strain KSM-K16) (Alkalihalobacillus clausii) protein is Elongation factor G.